The following is a 387-amino-acid chain: S-adenosylmethionine synthase (387 aa).

His19 is a binding site for ATP. Residue Asp21 coordinates Mg(2+). Residue Glu47 coordinates K(+). Residue Gln103 coordinates L-methionine. The segment at 103–113 (QSPDIAQGVEL) is flexible loop. ATP-binding positions include 167 to 169 (DMK), 233 to 234 (RF), Asp242, 248 to 249 (RK), Ala265, and Lys269. Asp242 is an L-methionine binding site. Position 273 (Lys273) interacts with L-methionine.

It belongs to the AdoMet synthase family. In terms of assembly, homotetramer; dimer of dimers. Mg(2+) is required as a cofactor. The cofactor is K(+).

The protein resides in the cytoplasm. It carries out the reaction L-methionine + ATP + H2O = S-adenosyl-L-methionine + phosphate + diphosphate. Its pathway is amino-acid biosynthesis; S-adenosyl-L-methionine biosynthesis; S-adenosyl-L-methionine from L-methionine: step 1/1. Its function is as follows. Catalyzes the formation of S-adenosylmethionine (AdoMet) from methionine and ATP. The overall synthetic reaction is composed of two sequential steps, AdoMet formation and the subsequent tripolyphosphate hydrolysis which occurs prior to release of AdoMet from the enzyme. The sequence is that of S-adenosylmethionine synthase from Mycoplasma capricolum subsp. capricolum (strain California kid / ATCC 27343 / NCTC 10154).